A 677-amino-acid chain; its full sequence is DNA ligase (677 aa).

NAD(+) is bound by residues 34–38, 84–85, and Glu118; these read DAQYD and SL. The active-site N6-AMP-lysine intermediate is the Lys120. Arg141, Glu176, Lys283, and Lys307 together coordinate NAD(+). Residues Cys403, Cys406, Cys421, and Cys427 each coordinate Zn(2+). The BRCT domain occupies 594 to 677; that stretch reads ETASPISGKT…DLLKTVSNSE (84 aa).

Belongs to the NAD-dependent DNA ligase family. LigA subfamily. The cofactor is Mg(2+). Mn(2+) is required as a cofactor.

The enzyme catalyses NAD(+) + (deoxyribonucleotide)n-3'-hydroxyl + 5'-phospho-(deoxyribonucleotide)m = (deoxyribonucleotide)n+m + AMP + beta-nicotinamide D-nucleotide.. DNA ligase that catalyzes the formation of phosphodiester linkages between 5'-phosphoryl and 3'-hydroxyl groups in double-stranded DNA using NAD as a coenzyme and as the energy source for the reaction. It is essential for DNA replication and repair of damaged DNA. This Anaplasma phagocytophilum (strain HZ) protein is DNA ligase.